Consider the following 212-residue polypeptide: 3-isopropylmalate dehydratase small subunit (212 aa).

Belongs to the LeuD family. LeuD type 1 subfamily. As to quaternary structure, heterodimer of LeuC and LeuD.

The catalysed reaction is (2R,3S)-3-isopropylmalate = (2S)-2-isopropylmalate. Its pathway is amino-acid biosynthesis; L-leucine biosynthesis; L-leucine from 3-methyl-2-oxobutanoate: step 2/4. Its function is as follows. Catalyzes the isomerization between 2-isopropylmalate and 3-isopropylmalate, via the formation of 2-isopropylmaleate. This Pseudomonas aeruginosa (strain UCBPP-PA14) protein is 3-isopropylmalate dehydratase small subunit.